The primary structure comprises 321 residues: Geranylgeranyl transferase type-2 subunit beta 1 (321 aa).

Serine 2 is subject to N-acetylserine. 6 PFTB repeats span residues 14 to 55 (ADKH…DLLD), 62 to 103 (EEEV…ALFD), 110 to 151 (IGKV…SILK), 158 to 199 (VEKA…AITG), 206 to 247 (KDSL…IMID), and 254 to 296 (KAKL…SLLE). Geranylgeranyl diphosphate-binding positions include 184–186 (HAG) and 226–229 (RPEK). The Zn(2+) site is built by aspartate 232 and cysteine 234. Residue 235-238 (YSWW) participates in geranylgeranyl diphosphate binding. Histidine 284 serves as a coordination point for Zn(2+).

Belongs to the protein prenyltransferase subunit beta family. As to quaternary structure, heterotrimer composed of the alpha subunit RGTA, the beta subunit RGTB and REP; within this trimer, RGTA and RGTB form the catalytic component, while REP mediates peptide substrate binding. Requires Zn(2+) as cofactor. Mg(2+) is required as a cofactor.

The catalysed reaction is geranylgeranyl diphosphate + L-cysteinyl-[protein] = S-geranylgeranyl-L-cysteinyl-[protein] + diphosphate. The enzymatic reaction requires the aid of the Rab escort protein REP. Its function is as follows. Catalyzes the transfer of a geranylgeranyl moiety from geranylgeranyl diphosphate to both cysteines of Rab proteins with the C-terminal sequence -CCXX, CXXX, -XCCX and -XCXC, such as RABA1A, RABA2A, RABF2A and RABG2. Involved in the geranylgeranylation of RABA2A. In vitro, can prenylate PGGTI targets with the C-terminal sequence Cys-aliphatic-aliphatic-X (CaaX) with leucine in the terminal position. Substrates with the C-terminal sequence -CSIL such as ARAC11/ROP1 or GG2/AGG2 are prenylated independently of REP and when the beta subunit is associated with the alpha subunit RGTA1. In terms of biological role, required for male fertility and root tip growth. In Arabidopsis thaliana (Mouse-ear cress), this protein is Geranylgeranyl transferase type-2 subunit beta 1.